Here is a 581-residue protein sequence, read N- to C-terminus: Tail sheath protein (581 aa).

This sequence belongs to the myoviridae tail sheath protein family. As to quaternary structure, homomultimer.

It is found in the virion. The protein resides in the host cytoplasm. Its function is as follows. Polymerizes as an extended structure around the baseplate-tail tube complex. During ejection, the sheath shifts to a contracted form, thereby making the inner tail tube protrude through the host cell envelope. This is Tail sheath protein from Mycobacterium phage Bxz1 (Mycobacteriophage Bxz1).